We begin with the raw amino-acid sequence, 239 residues long: Small ribosomal subunit protein uS3c (239 aa).

A KH type-2 domain is found at 43–139; the sequence is IKNYIQKNRK…RLNIGIEKVK (97 aa).

This sequence belongs to the universal ribosomal protein uS3 family. As to quaternary structure, part of the 30S ribosomal subunit.

It localises to the plastid. It is found in the chloroplast. In Oryza nivara (Indian wild rice), this protein is Small ribosomal subunit protein uS3c (rps3).